The following is a 217-amino-acid chain: Large ribosomal subunit protein uL1 (217 aa).

Position 2 is an N-acetylserine (Ser2). Position 11 is a phosphotyrosine (Tyr11). 2 positions are modified to N6-acetyllysine: Lys91 and Lys106. Lys118 carries the N6-acetyllysine; alternate modification. A Glycyl lysine isopeptide (Lys-Gly) (interchain with G-Cter in SUMO1); alternate cross-link involves residue Lys118. Residue Lys118 forms a Glycyl lysine isopeptide (Lys-Gly) (interchain with G-Cter in SUMO2); alternate linkage. Residue Lys161 forms a Glycyl lysine isopeptide (Lys-Gly) (interchain with G-Cter in SUMO2) linkage.

Belongs to the universal ribosomal protein uL1 family. As to quaternary structure, component of the large ribosomal subunit.

Its subcellular location is the cytoplasm. Its function is as follows. Component of the large ribosomal subunit. The ribosome is a large ribonucleoprotein complex responsible for the synthesis of proteins in the cell. The protein is Large ribosomal subunit protein uL1 (Rpl10a) of Mus musculus (Mouse).